The primary structure comprises 249 residues: Adenylate kinase (249 aa).

Residue 43–48 coordinates ATP; that stretch reads GAGKGT. The segment at 63-92 is NMP; it reads ATGDMLRAQVAAKSALGVEAKKIMDQGGLV. AMP contacts are provided by residues Thr64, Arg69, 90–92, 119–122, and Gln126; these read GLV and GFPR. The interval 160–197 is LID; that stretch reads GRLVHPASGRSYHKLFNPPKKDMIDDVSGDALVQRSDD. Residues Arg161 and 170-171 contribute to the ATP site; that span reads SY. Arg194 and Arg205 together coordinate AMP. Gln233 contributes to the ATP binding site.

It belongs to the adenylate kinase family. AK2 subfamily. As to quaternary structure, monomer.

The protein localises to the cytoplasm. The protein resides in the cytosol. It is found in the mitochondrion intermembrane space. It carries out the reaction AMP + ATP = 2 ADP. Catalyzes the reversible transfer of the terminal phosphate group between ATP and AMP. Plays an important role in cellular energy homeostasis and in adenine nucleotide metabolism. Adenylate kinase activity is critical for regulation of the phosphate utilization and the AMP de novo biosynthesis pathways. This is Adenylate kinase from Debaryomyces hansenii (strain ATCC 36239 / CBS 767 / BCRC 21394 / JCM 1990 / NBRC 0083 / IGC 2968) (Yeast).